Consider the following 505-residue polypeptide: Cytochrome P450 monooxygenase iliC (505 aa).

Residues 6–26 (LIAQHSLTLTIASSVLLVFLL) traverse the membrane as a helical segment. Residue cysteine 453 coordinates heme.

Belongs to the cytochrome P450 family. Requires heme as cofactor.

It is found in the membrane. The catalysed reaction is (3E,5S)-3-[(2E,4E,8S,10E,12Z)-1-hydroxy-4,8-dimethyltetradeca-2,4,10,12-tetraen-1-ylidene]-5-[(4-hydroxyphenyl)methyl]pyrrolidine-2,4-dione + reduced [NADPH--hemoprotein reductase] + O2 = 3-[(2E,4E,8S,10E,12Z)-4,8-dimethyltetradeca-2,4,10,12-tetraenoyl]-4-hydroxy-5-(4-hydroxyphenyl)-1,2-dihydropyridin-2-one + oxidized [NADPH--hemoprotein reductase] + 2 H2O. Its pathway is mycotoxin biosynthesis. In terms of biological role, cytochrome P450 monooxygenase; part of the gene cluster that mediates the biosynthesis of ilicicolin H, a 4-hydroxy-2-pyridonealkaloid that has potent and broad antifungal activities by inhibiting the mitochondrial respiration chain. IliC catalyzes the ring expansion of the tetramate intermediate to the acyclic 2-pyridone intermediate that contains the trans bis-diene chain. The biosynthesis of ilicicolin H starts with formation of the tetramic acid by the hybrid PKS-NRPS synthetase iliA with the partnering trans-enoyl reductase iliB since iliA lacks a designated enoylreductase (ER) domain. The cytochrome P450 monooxygenase iliC then catalyzes the ring expansion of the tetramate to the acyclic 2-pyridone. The pericyclase iliD further converts the acyclic 2-pyridone into 8-epi-ilicicolin H. 8-epi-ilicicolin H might then spontaneously convert to ilicicolin H since ilicicolin H is produced in the absence of the epimerase iliE, in contrast to what was observed for the Talaromyces variabilis ilicolin H biosynthetic pathway. The chain is Cytochrome P450 monooxygenase iliC from Neonectria sp. (strain DH2).